A 506-amino-acid polypeptide reads, in one-letter code: MEDHQHVPIDIQTSKLLDWLVDRRHCSLKWQSLVLTIREKINAAIQDMPESEEIAQLLSGSYIHYFHCLRILDLLKGTEASTKNIFGRYSSQRMKDWQEIIALYEKDNTYLVELSSLLVRNVNYEIPSLKKQIAKCQQLQQEYSRKEEECQAGAAEMREQFYHSCKQYGITGENVRGELLALVKDLPSQLAETGAAARQSLGEAIDVYQASVGFVCESHTEQVLPMLQFVQKRGNSTVYEWRTGTEPSVVERPHLEELPEQVAEDAIDWGDFGVEAVSEGTDSGISAKAAGIDWGIFPESDSKDPGGDGIDWGDDAVALQITVLEAGTQAPEGVARGPDALTLLEYTETRNQFLDELMELEIFLARRAVELSEEADVLSVSQFQLAPAILQGQTKEKTVTMVSVLEDLIGKLTSLQLQHLFMILASPRYVDRVTEFLQQKLKQSQLLALKKELMVQKQQEALEEQAALEPKLDLLLEKTKELQKLIEADISKRYSGRPVNLMGTSL.

Short sequence motifs (shuffled ATG8-binding motif) lie at residues isoleucine 267–glycine 270, isoleucine 292–glycine 295, and isoleucine 310–glycine 313. The required for interaction with UFL1 and mediates interaction with CHEK1 stretch occupies residues tryptophan 269 to leucine 506. Positions aspartate 355–glutamate 370 are RPL10a-binding domain (RBD). Residue lysine 450 forms a Glycyl lysine isopeptide (Lys-Gly) (interchain with G-Cter in SUMO2) linkage.

It belongs to the CDK5RAP3 family. In terms of assembly, substrate adapter component of the UFM1 ribosome E3 ligase (UREL) complex, composed of UFL1, DDRGK1 and CDK5RAP3. Interaction with UFL1 anchors CDK5RAP3 in the cytoplasm, preventing its translocation to the nucleus which allows expression of the CCND1 cyclin and progression of cells through the G1/S transition. Interacts with ATG8 family proteins MAP1LC3A, MAP1LC3B, GABARAP, GABARAPL1 and GABARAPL2. Interacts with CDK5R1; competes with CDK5RAP1 and CDK5RAP2. Interacts with RELA. Interacts with CHEK1; may negatively regulate CHEK1 and thereby stimulate entry into mitosis. Interacts with CDKN2A/ARF and MDM2; forms a ternary complex involved in regulation of p53/TP53. Interacts with MAPK14. Interacts with CCNB1. Interacts with TUBG1; may regulate CDK5RAP3 in mitotic G2/M transition checkpoint. In terms of processing, may be phosphorylated by CDK5. Ubiquitinated. Probably triggers proteasomal degradation and is negatively regulated by UFL1. Post-translationally, may be ufmylated. In terms of processing, cleaved by caspases early during apoptosis, the resulting peptides may play a role in rupture of the nuclear envelope.

The protein localises to the endoplasmic reticulum membrane. It localises to the cytoplasm. It is found in the nucleus. The protein resides in the cytoskeleton. Its subcellular location is the microtubule organizing center. The protein localises to the centrosome. In terms of biological role, substrate adapter of E3 ligase complexes mediating ufmylation, the covalent attachment of the ubiquitin-like modifier UFM1 to substrate proteins, and which is involved in various processes, such as ribosome recycling and reticulophagy (also called ER-phagy). As part of the UREL complex, plays a key role in ribosome recycling by promoting mono-ufmylation of RPL26/uL24 subunit of the 60S ribosome. Ufmylation of RPL26/uL24 occurs on free 60S ribosomes following ribosome dissociation: it weakens the junction between post-termination 60S subunits and SEC61 translocons, promoting release and recycling of the large ribosomal subunit from the endoplasmic reticulum membrane. Ufmylation of RPL26/uL24 and subsequent 60S ribosome recycling either take place after normal termination of translation or after ribosome stalling during cotranslational translocation at the endoplasmic reticulum. Within the UREL complex, CDK5RAP3 acts as a substrate adapter that constrains UFL1 ligase activity to mono-ufmylate RPL26/uL24 at 'Lys-134'. The UREL complex is also involved in reticulophagy in response to endoplasmic reticulum stress by promoting ufmylation of proteins such as CYB5R3, thereby promoting lysosomal degradation of ufmylated proteins. Also acts as a regulator of transcription: negatively regulates NF-kappa-B-mediated gene transcription through the control of RELA phosphorylation. Also regulates mitotic G2/M transition checkpoint and mitotic G2 DNA damage checkpoint. Through its interaction with CDKN2A/ARF and MDM2 may induce MDM2-dependent p53/TP53 ubiquitination, stabilization and activation in the nucleus, thereby promoting G1 cell cycle arrest and inhibition of cell proliferation. May also play a role in the rupture of the nuclear envelope during apoptosis. May regulate MAPK14 activity by regulating its dephosphorylation by PPM1D/WIP1. Required for liver development. The sequence is that of CDK5 regulatory subunit-associated protein 3 from Pongo abelii (Sumatran orangutan).